A 505-amino-acid chain; its full sequence is Prenylcysteine oxidase 1 (505 aa).

A signal peptide spans 1-27; sequence MGRVVAELVSSLLGLWLLLCSCGCPEG. Asn-196, Asn-323, and Asn-353 each carry an N-linked (GlcNAc...) asparagine glycan.

This sequence belongs to the prenylcysteine oxidase family. FAD serves as cofactor.

Its subcellular location is the lysosome. The catalysed reaction is an S-polyprenyl-L-cysteine + O2 + H2O = a polyprenal + L-cysteine + H2O2. It catalyses the reaction S-(2E,6E)-farnesyl-L-cysteine + O2 + H2O = (2E,6E)-farnesal + L-cysteine + H2O2. The enzyme catalyses [(2E,6E,10E)-geranylgeranyl]-L-cysteine + O2 + H2O = (2E,6E,10E)-geranylgeranial + L-cysteine + H2O2. Its function is as follows. Prenylcysteine oxidase that cleaves the thioether bond of prenyl-L-cysteines, such as farnesylcysteine and geranylgeranylcysteine. Only active against free prenylcysteines and not prenylcysteine residues within prenylated proteins or peptides. Involved in the final step in the degradation of prenylated proteins, by degrading prenylcysteines after the protein has been degraded. This chain is Prenylcysteine oxidase 1, found in Pongo abelii (Sumatran orangutan).